The sequence spans 212 residues: Uridine kinase (212 aa).

13 to 20 (GASASGKS) lines the ATP pocket.

Belongs to the uridine kinase family.

The protein localises to the cytoplasm. The catalysed reaction is uridine + ATP = UMP + ADP + H(+). It catalyses the reaction cytidine + ATP = CMP + ADP + H(+). It participates in pyrimidine metabolism; CTP biosynthesis via salvage pathway; CTP from cytidine: step 1/3. It functions in the pathway pyrimidine metabolism; UMP biosynthesis via salvage pathway; UMP from uridine: step 1/1. In Shewanella putrefaciens (strain CN-32 / ATCC BAA-453), this protein is Uridine kinase.